Consider the following 394-residue polypeptide: Phosphopentomutase (394 aa).

6 residues coordinate Mn(2+): Asp13, Asp286, His291, Asp327, His328, and His339.

The protein belongs to the phosphopentomutase family. It depends on Mn(2+) as a cofactor.

It is found in the cytoplasm. It catalyses the reaction 2-deoxy-alpha-D-ribose 1-phosphate = 2-deoxy-D-ribose 5-phosphate. The enzyme catalyses alpha-D-ribose 1-phosphate = D-ribose 5-phosphate. Its pathway is carbohydrate degradation; 2-deoxy-D-ribose 1-phosphate degradation; D-glyceraldehyde 3-phosphate and acetaldehyde from 2-deoxy-alpha-D-ribose 1-phosphate: step 1/2. Isomerase that catalyzes the conversion of deoxy-ribose 1-phosphate (dRib-1-P) and ribose 1-phosphate (Rib-1-P) to deoxy-ribose 5-phosphate (dRib-5-P) and ribose 5-phosphate (Rib-5-P), respectively. The protein is Phosphopentomutase of Bacillus cereus (strain ATCC 10987 / NRS 248).